The sequence spans 303 residues: Protease HtpX homolog (303 aa).

Transmembrane regions (helical) follow at residues 19-39 (IIIF…VSYF) and 41-61 (LGEF…YYAY). H146 is a Zn(2+) binding site. Residue E147 is part of the active site. Residue H150 participates in Zn(2+) binding. 2 helical membrane passes run 156 to 176 (VRLQ…GDSL) and 192 to 212 (NILG…ATLL). Zn(2+) is bound at residue E221.

This sequence belongs to the peptidase M48B family. Requires Zn(2+) as cofactor.

The protein resides in the cell inner membrane. The sequence is that of Protease HtpX homolog from Dictyoglomus thermophilum (strain ATCC 35947 / DSM 3960 / H-6-12).